Here is a 162-residue protein sequence, read N- to C-terminus: Ribosome maturation factor RimP (162 aa).

This sequence belongs to the RimP family.

The protein resides in the cytoplasm. Required for maturation of 30S ribosomal subunits. The chain is Ribosome maturation factor RimP from Cupriavidus necator (strain ATCC 17699 / DSM 428 / KCTC 22496 / NCIMB 10442 / H16 / Stanier 337) (Ralstonia eutropha).